We begin with the raw amino-acid sequence, 423 residues long: Serine--tRNA ligase (423 aa).

229-231 (TAE) serves as a coordination point for L-serine. An ATP-binding site is contributed by 258-260 (RRE). An L-serine-binding site is contributed by Glu281. 345-348 (EISS) contributes to the ATP binding site. Ser379 contributes to the L-serine binding site.

It belongs to the class-II aminoacyl-tRNA synthetase family. Type-1 seryl-tRNA synthetase subfamily. Homodimer. The tRNA molecule binds across the dimer.

It localises to the cytoplasm. The catalysed reaction is tRNA(Ser) + L-serine + ATP = L-seryl-tRNA(Ser) + AMP + diphosphate + H(+). It carries out the reaction tRNA(Sec) + L-serine + ATP = L-seryl-tRNA(Sec) + AMP + diphosphate + H(+). It functions in the pathway aminoacyl-tRNA biosynthesis; selenocysteinyl-tRNA(Sec) biosynthesis; L-seryl-tRNA(Sec) from L-serine and tRNA(Sec): step 1/1. In terms of biological role, catalyzes the attachment of serine to tRNA(Ser). Is also able to aminoacylate tRNA(Sec) with serine, to form the misacylated tRNA L-seryl-tRNA(Sec), which will be further converted into selenocysteinyl-tRNA(Sec). This Methanosarcina barkeri (strain Fusaro / DSM 804) protein is Serine--tRNA ligase (serS1).